The chain runs to 453 residues: UDP-glycosyltransferase 76E1 (453 aa).

Residues serine 272, 331-333 (APQ), 348-356 (HCGWNSTLE), and 370-373 (TGDQ) each bind UDP-alpha-D-glucose.

The protein belongs to the UDP-glycosyltransferase family.

Its function is as follows. Possesses low quercetin 3-O-glucosyltransferase and 7-O-glucosyltransferase activities in vitro. This chain is UDP-glycosyltransferase 76E1 (UGT76E1), found in Arabidopsis thaliana (Mouse-ear cress).